The chain runs to 299 residues: Lathosterol oxidase (299 aa).

The next 3 helical transmembrane spans lie at 32–52 (ISLLIVTNLGAYILYFFCATL), 79–99 (FTVKSLPWISIPTVSLFLLEL), and 117–137 (IHLMVSVVSFLFFTDMLIYWI). The Fatty acid hydroxylase domain occupies 124-252 (VSFLFFTDML…YFTLWDRIGG (129 aa)). Residues 138 to 143 (HRGLHH) carry the Histidine box-1 motif. The Histidine box-2 signature appears at 151 to 155 (HKPHH). The helical transmembrane segment at 186-206 (VFPLHKVVYLGLYVLVNVWTI) threads the bilayer. The short motif at 228–233 (HHTDHH) is the Histidine box-3 element. S253 is subject to Phosphoserine. The interval 280–299 (FAENGCKGKKVGNGEFTKNK) is disordered.

It belongs to the sterol desaturase family. It depends on Fe cation as a cofactor.

The protein localises to the endoplasmic reticulum membrane. The catalysed reaction is a Delta(7)-sterol + 2 Fe(II)-[cytochrome b5] + O2 + 2 H(+) = a Delta(5),Delta(7)-sterol + 2 Fe(III)-[cytochrome b5] + 2 H2O. It catalyses the reaction lathosterol + 2 Fe(II)-[cytochrome b5] + O2 + 2 H(+) = 7-dehydrocholesterol + 2 Fe(III)-[cytochrome b5] + 2 H2O. The enzyme catalyses 5alpha-cholesta-7,24-dien-3beta-ol + 2 Fe(II)-[cytochrome b5] + O2 + 2 H(+) = 7-dehydrodesmosterol + 2 Fe(III)-[cytochrome b5] + 2 H2O. Its pathway is steroid biosynthesis; cholesterol biosynthesis. Functionally, catalyzes the penultimate step of the biosynthesis of cholesterol, the dehydrogenation of lathosterol into 7-dehydrocholesterol (7-DHC). Cholesterol is the major sterol component in mammalian membranes and a precursor for bile acid and steroid hormone synthesis. In addition to its essential role in cholesterol biosynthesis, it also indirectly regulates ferroptosis through the production of 7-DHC. By diverting the spread of damage caused by peroxyl radicals from the phospholipid components to its sterol nucleus, 7-DHC prevents this form of cell death. The polypeptide is Lathosterol oxidase (Mus musculus (Mouse)).